The sequence spans 92 residues: Large ribosomal subunit protein bL27 (92 aa).

Positions 1 to 10 (MLLQLQIQLF) are excised as a propeptide.

This sequence belongs to the bacterial ribosomal protein bL27 family. Post-translationally, the N-terminus is cleaved by ribosomal processing cysteine protease Prp.

This chain is Large ribosomal subunit protein bL27, found in Aster yellows witches'-broom phytoplasma (strain AYWB).